The following is a 396-amino-acid chain: Elongation factor Tu (396 aa).

Residues 11-205 (KPHVNIGTIG…IVDEYIPTPE (195 aa)) enclose the tr-type G domain. The G1 stretch occupies residues 20-27 (GHVDHGKT). 20 to 27 (GHVDHGKT) serves as a coordination point for GTP. Threonine 27 serves as a coordination point for Mg(2+). The tract at residues 61-65 (GITIN) is G2. The G3 stretch occupies residues 82-85 (DAPG). GTP-binding positions include 82–86 (DAPGH) and 137–140 (NKCD). Residues 137–140 (NKCD) form a G4 region. A G5 region spans residues 175–177 (SAL).

Belongs to the TRAFAC class translation factor GTPase superfamily. Classic translation factor GTPase family. EF-Tu/EF-1A subfamily. As to quaternary structure, monomer.

It is found in the cytoplasm. The enzyme catalyses GTP + H2O = GDP + phosphate + H(+). In terms of biological role, GTP hydrolase that promotes the GTP-dependent binding of aminoacyl-tRNA to the A-site of ribosomes during protein biosynthesis. The protein is Elongation factor Tu of Lactobacillus acidophilus (strain ATCC 700396 / NCK56 / N2 / NCFM).